We begin with the raw amino-acid sequence, 819 residues long: FYN-binding protein 1 (819 aa).

A compositionally biased stretch (polar residues) spans 1–45; it reads MAKFNTGSNPTEEAATSSRPFKVAGQSSPSGIQSRKNLFDNQGNA. Positions 1-490 are disordered; it reads MAKFNTGSNP…REKKEQELKK (490 aa). K3 carries the N6-acetyllysine modification. 2 positions are modified to phosphoserine: S28 and S46. Residues 69-79 are compositionally biased toward basic and acidic residues; sequence TYEEKPEKEPK. A compositionally biased stretch (pro residues) spans 150–160; the sequence is GPKPGPAPPVP. Residue S222 is modified to Phosphoserine. Composition is skewed to basic and acidic residues over residues 237–248 and 273–285; these read PPKEDPEDKDHG and NFEE…KTDL. S318 is subject to Phosphoserine. Pro residues-rich tracts occupy residues 342 to 351 and 380 to 412; these read GPPPPKPNRP and LPPP…PRNI. A compositionally biased stretch (acidic residues) spans 439–453; sequence LEEEQESEGETYEDI. At S445 the chain carries Phosphoserine. Positions 448-495 form a coiled coil; that stretch reads ETYEDIDSSKERDKKREKEEKKRLELERKEQKEREKKEQELKKKFKLT. The span at 454–489 shows a compositional bias: basic and acidic residues; the sequence is DSSKERDKKREKEEKKRLELERKEQKEREKKEQELK. The Nuclear localization signal motif lies at 479 to 493; that stretch reads KEREKKEQELKKKFK. The SH3 1 domain maps to 499–560; sequence QVIHHAKACC…KTTAVEIDYD (62 aa). Position 559 is a phosphotyrosine (Y559). S561 and S568 each carry phosphoserine. The SH2-binding; to LCP2 signature appears at 584 to 587; that stretch reads YDDV. Disordered regions lie at residues 589–635 and 649–728; these read EQDA…DEKT and KDDR…EKEE. Residues 610 to 626 show a composition bias toward acidic residues; the sequence is TDDEIYDGIEEEDDDDG. The SH2-binding; to FYN signature appears at 615–618; sequence YDGI. Residues 649–664 are compositionally biased toward basic and acidic residues; that stretch reads KDDRKKSIREKPKVSE. Residues 668 to 677 show a composition bias toward polar residues; it reads NEGSSLPSQH. Residues 682-692 show a composition bias toward acidic residues; the sequence is VGEEVYDDVDA. Y687 is subject to Phosphotyrosine. The Nuclear localization signal signature appears at 710–736; it reads RAKTEEKDPKKLKKQEKEEKDLRKKFK. Residues 711–728 show a composition bias toward basic and acidic residues; the sequence is AKTEEKDPKKLKKQEKEE. An SH3 2 domain is found at 736 to 804; that stretch reads KYDGEIRVLY…LRSYLVDNDG (69 aa).

As to quaternary structure, part of a complex consisting of SKAP2, FYB1 and PTPNS1. Part of a complex consisting of SKAP2, FYB1 and PIRB. Part of a complex consisting of SKAP1, FYB1 and CLNK. Interacts with CLNK (via its SH2 domain); this interaction allows SKAP1 and FYB1 to recruit FYN to the complex, thus promoting the phosphorylation of CLNK by FYN. Interacts with FYN. Interacts with LCP2. Interacts with SKAP1. Interacts with SKAP2. Interacts with FASLG. Interacts with EVL. Interacts with TMEM47. Interacts with LCK. T-cell receptor ligation leads to increased tyrosine phosphorylation. In terms of tissue distribution, expressed in hematopoietic tissues such as myeloid and T-cells, spleen and thymus. Not expressed in B-cells, nor in non-lymphoid tissues. FYB-130 is preferentially expressed in mature T-cells compared to FYB-120, whereas thymocytes showed a greater relative amount of FYB-120. Expressed in podocytes.

Its subcellular location is the cytoplasm. The protein resides in the nucleus. The protein localises to the cell junction. Functionally, acts as an adapter protein of the FYN and LCP2 signaling cascades in T-cells. May play a role in linking T-cell signaling to remodeling of the actin cytoskeleton. Modulates the expression of IL2. Involved in platelet activation. Prevents the degradation of SKAP1 and SKAP2. May be involved in high affinity immunoglobulin epsilon receptor signaling in mast cells. This Mus musculus (Mouse) protein is FYN-binding protein 1 (Fyb1).